A 380-amino-acid chain; its full sequence is Capsular polysaccharide biosynthesis glycosyltransferase CapM (380 aa).

The protein belongs to the glycosyltransferase group 1 family. Glycosyltransferase 4 subfamily.

It participates in capsule biogenesis; capsule polysaccharide biosynthesis. Functionally, required for the biosynthesis of type 1 capsular polysaccharide. This is Capsular polysaccharide biosynthesis glycosyltransferase CapM (capM) from Staphylococcus aureus.